The primary structure comprises 452 residues: MTDAAAVIERVRQRVDPTPAERRALAAAASRLTERAEAAIAELPVAADVVQVGSTARGTWVAGDRDIDLFVRFPSDLPREQLETYGTTVGAAVLPDGHEEYAEHPYVTGTFEGYAVDLVPCYDVAAATEIKSAVDRTPFHTTYLQEHLDDGLAADVRLCKQFLKGIGVYGSDLRTQGFSGYLCELLVVEYGGFEAMLAAIEDWQPPVVIDPAAHQQASFDDPLVVVDPTDPERNVAAVVSAANVATVQHHARRFRATPSEDAFTPASPAPLDAAALRSHIDRRDTTPLAVVLDAPDVVADQLYPQLYRSRDGVVRGLREHGFDVVRAAAWADERAVVFVELASAELPAVERHVGPPVSVGTHAERFYETYADDDGVYGPFVDDDGRYVVERDRDVRTAGGFARTELGTVALGARIESRVASGDYDVYVGDAVVEALLPEFESELAAYVDPKA.

ATP is bound by residues Ser-54 and Arg-57. CTP-binding residues include Ser-54 and Arg-57. Positions 66, 68, and 117 each coordinate Mg(2+). Residues His-140, Lys-160, and Tyr-169 each coordinate ATP. Positions 140, 160, and 169 each coordinate CTP.

Belongs to the tRNA nucleotidyltransferase/poly(A) polymerase family. Archaeal CCA-adding enzyme subfamily. Homodimer. Mg(2+) is required as a cofactor.

It carries out the reaction a tRNA precursor + 2 CTP + ATP = a tRNA with a 3' CCA end + 3 diphosphate. It catalyses the reaction a tRNA with a 3' CCA end + 2 CTP + ATP = a tRNA with a 3' CCACCA end + 3 diphosphate. Its function is as follows. Catalyzes the addition and repair of the essential 3'-terminal CCA sequence in tRNAs without using a nucleic acid template. Adds these three nucleotides in the order of C, C, and A to the tRNA nucleotide-73, using CTP and ATP as substrates and producing inorganic pyrophosphate. tRNA 3'-terminal CCA addition is required both for tRNA processing and repair. Also involved in tRNA surveillance by mediating tandem CCA addition to generate a CCACCA at the 3' terminus of unstable tRNAs. While stable tRNAs receive only 3'-terminal CCA, unstable tRNAs are marked with CCACCA and rapidly degraded. The chain is CCA-adding enzyme from Halobacterium salinarum (strain ATCC 29341 / DSM 671 / R1).